A 335-amino-acid chain; its full sequence is Dihydroorotate dehydrogenase (quinone) (335 aa).

Residues 58 to 62 (AGADK) and T82 each bind FMN. K62 contacts substrate. Position 107-111 (107-111 (NRNGF)) interacts with substrate. The FMN site is built by N135 and N168. N168 contributes to the substrate binding site. The active-site Nucleophile is the S171. N173 contributes to the substrate binding site. The FMN site is built by K213 and G241. A substrate-binding site is contributed by 242-243 (NT). Residues G264, G293, and 314 to 315 (YS) each bind FMN.

This sequence belongs to the dihydroorotate dehydrogenase family. Type 2 subfamily. As to quaternary structure, monomer. It depends on FMN as a cofactor.

Its subcellular location is the cell membrane. It catalyses the reaction (S)-dihydroorotate + a quinone = orotate + a quinol. It participates in pyrimidine metabolism; UMP biosynthesis via de novo pathway; orotate from (S)-dihydroorotate (quinone route): step 1/1. Its function is as follows. Catalyzes the conversion of dihydroorotate to orotate with quinone as electron acceptor. The sequence is that of Dihydroorotate dehydrogenase (quinone) from Actinobacillus pleuropneumoniae serotype 7 (strain AP76).